The sequence spans 343 residues: MVSFKAGINLGGWISQYQVFSKEHFDTFITEKDIETIAEAGFDHVRLPFDYPIIESDDNVGEYKEDGLSYIDRCLEWCKKYNLGLVLDMHHAPGYRFQDFKTSTLFEDPNQQKRFVDIWRFLAKRYINEREHIAFELLNEVVEPDSTRWNKLMLECVKAIREIDSTRWLYIGGNNYNSPDELKNLADIDDDYIVYNFHFYNPFFFTHQKAHWSESAMAYNRTVKYPGQYEGIEEFVKNNPKYSFMMELNNLKLNKELLRKDLKPAIEFREKKKCKLYCGEFGVIAIADLESRIKWHEDYISLLEEYDIGGAVWNYKKMDFEIYNEDRKPVSQELVNILARRKT.

The Proton donor role is filled by glutamate 140. Residue glutamate 280 is the Nucleophile of the active site.

Belongs to the glycosyl hydrolase 5 (cellulase A) family.

The enzyme catalyses Endohydrolysis of (1-&gt;4)-beta-D-glucosidic linkages in cellulose, lichenin and cereal beta-D-glucans.. Its pathway is glycan metabolism; cellulose degradation. Functionally, this enzyme catalyzes the endohydrolysis of 1,4-beta-glucosidic linkages in cellulose, lichenin and cereal beta-D-glucans. This chain is Endoglucanase C (celC), found in Acetivibrio thermocellus (strain ATCC 27405 / DSM 1237 / JCM 9322 / NBRC 103400 / NCIMB 10682 / NRRL B-4536 / VPI 7372) (Clostridium thermocellum).